Reading from the N-terminus, the 249-residue chain is Uridylate kinase (249 aa).

ATP is bound at residue 21–24 (KLSG). Gly63 is a UMP binding site. ATP contacts are provided by Gly64 and Arg68. UMP-binding positions include Asp84 and 145-152 (TGNPFVTT). Residues Thr172, Tyr178, and Asp181 each contribute to the ATP site.

The protein belongs to the UMP kinase family. In terms of assembly, homohexamer.

Its subcellular location is the cytoplasm. It catalyses the reaction UMP + ATP = UDP + ADP. It participates in pyrimidine metabolism; CTP biosynthesis via de novo pathway; UDP from UMP (UMPK route): step 1/1. Its activity is regulated as follows. Inhibited by UTP. Catalyzes the reversible phosphorylation of UMP to UDP. The sequence is that of Uridylate kinase from Francisella tularensis subsp. tularensis (strain FSC 198).